The chain runs to 337 residues: MKALQTLMSGESLTQDQTREFFQRLIKGELNDIQVSAALIAMKMRGETPAELAGAAEAILSAAKPFLRSDTTVIDSCGTGGDGSNTINISTTAALVAASMGLAVAKHGNRSVSSRSGSADVLEALKLRVNLDPSDASTQLADNGFCFLFAPHYHPGIKHAMPVRQTLKTRTLFNLIGPLVNPARPDAQLLGVYSEEWVRPMAETLQRLGVKRAMVVHGSGLDELALHGPTRVIELRNGELNDYHVTPNDFGVPSAPLDELKGGDADFNARILEDILAGGGSPAQRHSVAMNVAALLYLSGQYNDMKAATAATMEHLDTGQPLLHLRRVQDAQETYHV.

Residues Gly78, 81-82 (GD), Thr86, 88-91 (NIST), 106-114 (KHGNRSVSS), and Ser118 contribute to the 5-phospho-alpha-D-ribose 1-diphosphate site. An anthranilate-binding site is contributed by Gly78. Residue Ser90 coordinates Mg(2+). Residue Asn109 participates in anthranilate binding. Arg164 contributes to the anthranilate binding site. Mg(2+)-binding residues include Asp222 and Glu223.

This sequence belongs to the anthranilate phosphoribosyltransferase family. In terms of assembly, homodimer. Mg(2+) is required as a cofactor.

The catalysed reaction is N-(5-phospho-beta-D-ribosyl)anthranilate + diphosphate = 5-phospho-alpha-D-ribose 1-diphosphate + anthranilate. It participates in amino-acid biosynthesis; L-tryptophan biosynthesis; L-tryptophan from chorismate: step 2/5. Functionally, catalyzes the transfer of the phosphoribosyl group of 5-phosphorylribose-1-pyrophosphate (PRPP) to anthranilate to yield N-(5'-phosphoribosyl)-anthranilate (PRA). In Idiomarina loihiensis (strain ATCC BAA-735 / DSM 15497 / L2-TR), this protein is Anthranilate phosphoribosyltransferase.